Consider the following 480-residue polypeptide: ATP synthase subunit beta (480 aa).

Position 153–160 (153–160 (GGAGVGKT)) interacts with ATP.

It belongs to the ATPase alpha/beta chains family. F-type ATPases have 2 components, CF(1) - the catalytic core - and CF(0) - the membrane proton channel. CF(1) has five subunits: alpha(3), beta(3), gamma(1), delta(1), epsilon(1). CF(0) has three main subunits: a(1), b(2) and c(9-12). The alpha and beta chains form an alternating ring which encloses part of the gamma chain. CF(1) is attached to CF(0) by a central stalk formed by the gamma and epsilon chains, while a peripheral stalk is formed by the delta and b chains.

The protein localises to the cell membrane. It carries out the reaction ATP + H2O + 4 H(+)(in) = ADP + phosphate + 5 H(+)(out). In terms of biological role, produces ATP from ADP in the presence of a proton gradient across the membrane. The catalytic sites are hosted primarily by the beta subunits. In Lactobacillus johnsonii (strain CNCM I-12250 / La1 / NCC 533), this protein is ATP synthase subunit beta.